The primary structure comprises 127 residues: Small ribosomal subunit protein uS11 (127 aa).

It belongs to the universal ribosomal protein uS11 family. In terms of assembly, part of the 30S ribosomal subunit. Interacts with proteins S7 and S18. Binds to IF-3.

In terms of biological role, located on the platform of the 30S subunit, it bridges several disparate RNA helices of the 16S rRNA. Forms part of the Shine-Dalgarno cleft in the 70S ribosome. This is Small ribosomal subunit protein uS11 from Rickettsia canadensis (strain McKiel).